The following is a 475-amino-acid chain: Deoxyguanosinetriphosphate triphosphohydrolase-like protein (475 aa).

The HD domain occupies 118 to 272 (RLTHTLEVAQ…MDLSDDIAYS (155 aa)).

The protein belongs to the dGTPase family. Type 2 subfamily.

The sequence is that of Deoxyguanosinetriphosphate triphosphohydrolase-like protein (dgt) from Bifidobacterium longum (strain NCC 2705).